The chain runs to 28 residues: Trypsin inhibitor 2 (28 aa).

3 disulfide bridges follow: cysteine 3–cysteine 20, cysteine 10–cysteine 22, and cysteine 16–cysteine 27.

This sequence belongs to the protease inhibitor I7 (squash-type serine protease inhibitor) family.

It localises to the secreted. In terms of biological role, inhibits trypsin. The protein is Trypsin inhibitor 2 of Momordica charantia (Bitter gourd).